Here is a 264-residue protein sequence, read N- to C-terminus: Small ribosomal subunit protein eS1 (264 aa).

Positions 232–264 (HGEGGGAGKPSGDEAGTKVERADGYEPPVQESV) are disordered. The span at 242–255 (SGDEAGTKVERADG) shows a compositional bias: basic and acidic residues.

It belongs to the eukaryotic ribosomal protein eS1 family. Component of the small ribosomal subunit. Mature ribosomes consist of a small (40S) and a large (60S) subunit. The 40S subunit contains about 33 different proteins and 1 molecule of RNA (18S). The 60S subunit contains about 49 different proteins and 3 molecules of RNA (28S, 5.8S and 5S). Part of the small subunit (SSU) processome, composed of more than 70 proteins and the RNA chaperone small nucleolar RNA (snoRNA) U3.

The protein resides in the cytoplasm. It localises to the nucleus. Its subcellular location is the nucleolus. Its function is as follows. Component of the small ribosomal subunit. The ribosome is a large ribonucleoprotein complex responsible for the synthesis of proteins in the cell. Part of the small subunit (SSU) processome, first precursor of the small eukaryotic ribosomal subunit. During the assembly of the SSU processome in the nucleolus, many ribosome biogenesis factors, an RNA chaperone and ribosomal proteins associate with the nascent pre-rRNA and work in concert to generate RNA folding, modifications, rearrangements and cleavage as well as targeted degradation of pre-ribosomal RNA by the RNA exosome. May play a role during erythropoiesis. The chain is Small ribosomal subunit protein eS1 from Taeniopygia guttata (Zebra finch).